The chain runs to 496 residues: Probable chlorophyll(ide) b reductase NYC1, chloroplastic (496 aa).

A chloroplast-targeting transit peptide spans 1-43; sequence MTTLTKIQVYPQVLEHRLFFRDPIRVGSRLTCRERSNRVYVHR. The next 2 helical transmembrane spans lie at 105–125 and 132–152; these read YIVTMTSTGAILLIGFQLSGG and LVWYSWLGGIIIGTMTGANMV. 166-190 lines the NAD(+) pocket; that stretch reads ITGSTRGLGKALAREFLLSGDRVIV. Residues 195–224 are a coiled coil; that stretch reads SESVDMTVKELEQNLKEIMSNASESARKKL. Tyr-330 functions as the Proton acceptor in the catalytic mechanism. A helical membrane pass occupies residues 470–490; the sequence is WVSVFSLSVVCAFIILQSTTP.

This sequence belongs to the short-chain dehydrogenases/reductases (SDR) family. In terms of assembly, interacts with NOL to form a complex that acts as a chlorophyll b reductase. Interacts with HCAR, RCCR, SGR1 and the LHCII complex. Part of a SGR1-CCE-LHCII complex, which acts in chlorophyll breakdown.

It is found in the plastid. The protein resides in the chloroplast thylakoid membrane. It catalyses the reaction 7(1)-hydroxychlorophyllide a + NAD(+) = chlorophyllide b + NADH + H(+). It carries out the reaction 7(1)-hydroxychlorophyllide a + NADP(+) = chlorophyllide b + NADPH + H(+). Its function is as follows. Involved in chlorophyll b degradation. Belongs to the chlorophyll catabolic enzymes (CCEs). The sequence is that of Probable chlorophyll(ide) b reductase NYC1, chloroplastic (NYC1) from Arabidopsis thaliana (Mouse-ear cress).